The primary structure comprises 259 residues: MDNNRKVIIVGAGPGDPELITIKGKKAIEEADVIIYAGSLVNEKLLEYNKKNAEIYNSANMNLEEIIDVMVKAVNQGKKVVRLHTGDPSIYGAIKEQIDELSKYGIDVEIIPGVSSLFAATASLKVELTLPEVSQTVIITRPEGRTPMPEKEKLRDLAKHQSTMAIFLGVSMIDKVVKELIEGGYREETPVAVVYHASWDDEKIVRGTLKDIAEKVKKEGIKKTALIIVGEVLNPKYYAYSKLYDKNFEHEYRKSHKKF.

The protein belongs to the precorrin methyltransferase family.

It carries out the reaction Co-precorrin-4 + S-adenosyl-L-methionine = Co-precorrin-5A + S-adenosyl-L-homocysteine + H(+). It functions in the pathway cofactor biosynthesis; adenosylcobalamin biosynthesis; cob(II)yrinate a,c-diamide from sirohydrochlorin (anaerobic route): step 4/10. Catalyzes the methylation of C-11 in cobalt-precorrin-4 to form cobalt-precorrin-5A. The polypeptide is Cobalt-precorrin-4 C(11)-methyltransferase (cbiF) (Methanocaldococcus jannaschii (strain ATCC 43067 / DSM 2661 / JAL-1 / JCM 10045 / NBRC 100440) (Methanococcus jannaschii)).